The following is a 531-amino-acid chain: Light-independent protochlorophyllide reductase subunit B (531 aa).

Asp36 provides a ligand contact to [4Fe-4S] cluster. Asp291 functions as the Proton donor in the catalytic mechanism. 426-427 (GL) contacts substrate.

It belongs to the ChlB/BchB/BchZ family. Protochlorophyllide reductase is composed of three subunits; ChlL, ChlN and ChlB. Forms a heterotetramer of two ChlB and two ChlN subunits. [4Fe-4S] cluster serves as cofactor.

The enzyme catalyses chlorophyllide a + oxidized 2[4Fe-4S]-[ferredoxin] + 2 ADP + 2 phosphate = protochlorophyllide a + reduced 2[4Fe-4S]-[ferredoxin] + 2 ATP + 2 H2O. It functions in the pathway porphyrin-containing compound metabolism; chlorophyll biosynthesis (light-independent). Functionally, component of the dark-operative protochlorophyllide reductase (DPOR) that uses Mg-ATP and reduced ferredoxin to reduce ring D of protochlorophyllide (Pchlide) to form chlorophyllide a (Chlide). This reaction is light-independent. The NB-protein (ChlN-ChlB) is the catalytic component of the complex. This chain is Light-independent protochlorophyllide reductase subunit B, found in Prochlorococcus marinus (strain MIT 9211).